The chain runs to 207 residues: Putative 3-methyladenine DNA glycosylase (207 aa).

It belongs to the DNA glycosylase MPG family.

This Burkholderia lata (strain ATCC 17760 / DSM 23089 / LMG 22485 / NCIMB 9086 / R18194 / 383) protein is Putative 3-methyladenine DNA glycosylase.